The following is a 138-amino-acid chain: Cellular retinoic acid-binding protein 2 (138 aa).

Positions 21–31 (KVLGVNVMLRK) match the Nuclear localization signal motif. K102 participates in a covalent cross-link: Glycyl lysine isopeptide (Lys-Gly) (interchain with G-Cter in SUMO). Residue 133-135 (RVY) participates in all-trans-retinoate binding.

It belongs to the calycin superfamily. Fatty-acid binding protein (FABP) family. As to quaternary structure, interacts with importin alpha, RXR and RARA. Sumoylated in response to retinoic acid binding, sumoylation is critical for dissociation from ER and subsequent nuclear translocation.

It localises to the cytoplasm. It is found in the endoplasmic reticulum. The protein localises to the nucleus. Its function is as follows. Transports retinoic acid to the nucleus. Regulates the access of retinoic acid to the nuclear retinoic acid receptors. The sequence is that of Cellular retinoic acid-binding protein 2 (CRABP2) from Bos taurus (Bovine).